The following is a 338-amino-acid chain: Cytoskeleton protein RodZ (338 aa).

At 1–111 (MNTEASQDQT…LGKKHKKRDG (111 aa)) the chain is on the cytoplasmic side. The HTH cro/C1-type domain maps to 19-79 (LRQAREALGL…KLVHLPEDEL (61 aa)). Residues 30-49 (QQMVAERLCLKVSTIRDIEE) constitute a DNA-binding region (H-T-H motif). A helical; Signal-anchor for type II membrane protein membrane pass occupies residues 112 to 132 (WLMSFTWLIVLVVLGLTGAWW). At 133-338 (WQNHQAQQAE…RVARLTVGVE (206 aa)) the chain is on the periplasmic side. Composition is skewed to polar residues over residues 151–163 (SAQLSQNGGQSVP) and 180–195 (PVANSQPSTPTENGTV). Positions 151-253 (SAQLSQNGGQ…LPTADAGVTG (103 aa)) are disordered. Positions 196 to 209 (PATSSAAPADTANN) are enriched in low complexity. Residues 210 to 241 (GVNTTAPQGTTSAESAVVSPSQAPLPSVSTAQ) show a composition bias toward polar residues.

The protein belongs to the RodZ family.

It is found in the cell inner membrane. Its function is as follows. Cytoskeletal protein that is involved in cell-shape control through regulation of the length of the long axis. The sequence is that of Cytoskeleton protein RodZ from Yersinia enterocolitica serotype O:8 / biotype 1B (strain NCTC 13174 / 8081).